Here is a 516-residue protein sequence, read N- to C-terminus: Facilitated glucose transporter homolog (516 aa).

The interval 1 to 37 (MNAVVASQNKNDRSFSNMESESSSNVEKSEKENHHQS) is disordered. At 1–47 (MNAVVASQNKNDRSFSNMESESSSNVEKSEKENHHQSLPDENWTPFL) the chain is on the cytoplasmic side. Residues 14-26 (SFSNMESESSSNV) show a composition bias toward low complexity. The segment covering 27–37 (EKSEKENHHQS) has biased composition (basic and acidic residues). The chain crosses the membrane as a helical span at residues 48 to 68 (FFCISSIALASFQDGFQIGCI). Over 69-101 (NAPGPLIIDWIKKCHFELFGEVLSQYQADFIWS) the chain is Extracellular. The helical transmembrane segment at 102-122 (VAVSMFSVGGMFGSFCSGFLA) threads the bilayer. The Cytoplasmic portion of the chain corresponds to 123 to 138 (DKFGRKSTLLYNNILA). Residues 139 to 159 (LLAAVCLSTSKLFNFYPMIVF) form a helical membrane-spanning segment. Topologically, residues 160 to 161 (GR) are extracellular. A helical membrane pass occupies residues 162–182 (FLVGLNCGITSGLVPMFLTEL). Residues 183–200 (APANLRGKCGSFHQLNIS) are Cytoplasmic-facing. Residues 201 to 221 (VAIVLSQALGLPQIFGTQVGW) traverse the membrane as a helical segment. P222 is a topological domain (extracellular). A helical membrane pass occupies residues 223–243 (YIFACVAIPTFLQLATIPFCV). Topologically, residues 244 to 306 (ESPKYLISKL…SLFKGDNQWP (63 aa)) are cytoplasmic. Residues 307–327 (MIVSILMMFSQQFSGISAVTF) form a helical membrane-spanning segment. Topologically, residues 328–344 (YSTLIFKRNGLSGNEPM) are extracellular. A helical transmembrane segment spans residues 345–365 (YATVGFGCIKLIATFGCLFLI). The Cytoplasmic segment spans residues 366 to 376 (DHPKFGRKRLH). A helical transmembrane segment spans residues 377–397 (IAGLSGMCISSILIVITLTLS). Over 398–409 (NAGYHWASYMNV) the chain is Extracellular. A helical membrane pass occupies residues 410–430 (LFILSFVVTFAFGPGPIPWFF). Topologically, residues 431–444 (TSELFDSATRGRAA) are cytoplasmic. Residues 445–465 (AVSATSNWVANWMVGLTFLPI) form a helical membrane-spanning segment. At 466–471 (NNIIHQ) the chain is on the extracellular side. The helical transmembrane segment at 472–492 (YAFLMFTFFTFTFAIFTWKFV) threads the bilayer. Residues 493-516 (PETKGKSPSAIRKELAFMRKRICS) are Cytoplasmic-facing.

This sequence belongs to the major facilitator superfamily. Sugar transporter (TC 2.A.1.1) family. Expressed in seam cells from the early embryonic stage through the L2 stage (at protein level).

The protein resides in the cell membrane. In terms of biological role, appears to have no transport activity for glucose. This chain is Facilitated glucose transporter homolog, found in Caenorhabditis elegans.